The primary structure comprises 512 residues: Replication initiation protein (512 aa).

In terms of biological role, essential for replication. Binds specifically to a 60-bp region corresponding to the putative origin of replication of pXO2. Also binds nonspecifically to single-stranded DNA with lower affinity. The polypeptide is Replication initiation protein (repS) (Bacillus anthracis).